A 324-amino-acid chain; its full sequence is tRNA dimethylallyltransferase (324 aa).

18-25 (GPTAVGKT) serves as a coordination point for ATP. Substrate is bound at residue 20–25 (TAVGKT). An interaction with substrate tRNA region spans residues 43–46 (DSRQ).

It belongs to the IPP transferase family. In terms of assembly, monomer. It depends on Mg(2+) as a cofactor.

The catalysed reaction is adenosine(37) in tRNA + dimethylallyl diphosphate = N(6)-dimethylallyladenosine(37) in tRNA + diphosphate. Its function is as follows. Catalyzes the transfer of a dimethylallyl group onto the adenine at position 37 in tRNAs that read codons beginning with uridine, leading to the formation of N6-(dimethylallyl)adenosine (i(6)A). In Salinibacter ruber (strain DSM 13855 / M31), this protein is tRNA dimethylallyltransferase.